Reading from the N-terminus, the 170-residue chain is Ureidoglycolate lyase (170 aa).

The protein belongs to the ureidoglycolate lyase family. As to quaternary structure, homodimer. Ni(2+) is required as a cofactor.

It carries out the reaction (S)-ureidoglycolate = urea + glyoxylate. It functions in the pathway nitrogen metabolism; (S)-allantoin degradation. Catalyzes the catabolism of the allantoin degradation intermediate (S)-ureidoglycolate, generating urea and glyoxylate. Involved in the utilization of allantoin as nitrogen source. The chain is Ureidoglycolate lyase from Pseudomonas syringae pv. syringae (strain B728a).